A 246-amino-acid chain; its full sequence is UDP-N-acetyl-D-mannosaminuronic acid transferase (246 aa).

Belongs to the glycosyltransferase 26 family.

It catalyses the reaction UDP-N-acetyl-alpha-D-mannosaminouronate + N-acetyl-alpha-D-glucosaminyl-di-trans,octa-cis-undecaprenyl diphosphate = beta-D-ManNAcA-(1-&gt;4)-alpha-D-GlcNAc-di-trans,octa-cis-undecaprenyl diphosphate + UDP + H(+). It functions in the pathway bacterial outer membrane biogenesis; enterobacterial common antigen biosynthesis. Catalyzes the synthesis of Und-PP-GlcNAc-ManNAcA (Lipid II), the second lipid-linked intermediate involved in enterobacterial common antigen (ECA) synthesis. This chain is UDP-N-acetyl-D-mannosaminuronic acid transferase, found in Escherichia coli (strain K12).